Here is a 339-residue protein sequence, read N- to C-terminus: MVREKVRISTRTLQWKCVESRADSKRLYYGRFILSPLMKGQADTIGIAMRRALLGEIEGTCITRAKSKKIPHEFSTITGIQESIHEILMNLKEIVLRSNLYGTHNASICVKGPGCVTAQDIILPPSVEIIDNTQHIASLREPIDLHIGLEIERNRGYCMKPPKNFQDGSYSIDAVFMPVRNANHSVHSYGNGNEKQEILFLEIWTNGSLTPKEALHEASRNLIDLFIPFLHAEEESFHLEKNQHKITLPLFAFHDRLAKLRKNQKEIALKSIFIDQLELAPKIYNCLKRSNIHTLWDLLKNSQEDLMKIEHFRIEDVKHIFGILKIEKHFTINLPKNKF.

The alpha N-terminal domain (alpha-NTD) stretch occupies residues 1 to 233; it reads MVREKVRIST…DLFIPFLHAE (233 aa). The segment at 267-339 is alpha C-terminal domain (alpha-CTD); the sequence is IALKSIFIDQ…FTINLPKNKF (73 aa).

Belongs to the RNA polymerase alpha chain family. In terms of assembly, in plastids the minimal PEP RNA polymerase catalytic core is composed of four subunits: alpha, beta, beta', and beta''. When a (nuclear-encoded) sigma factor is associated with the core the holoenzyme is formed, which can initiate transcription.

It is found in the plastid. The protein localises to the chloroplast. The catalysed reaction is RNA(n) + a ribonucleoside 5'-triphosphate = RNA(n+1) + diphosphate. DNA-dependent RNA polymerase catalyzes the transcription of DNA into RNA using the four ribonucleoside triphosphates as substrates. The chain is DNA-directed RNA polymerase subunit alpha from Populus alba (White poplar).